The primary structure comprises 445 residues: tRNA-2-methylthio-N(6)-dimethylallyladenosine synthase (445 aa).

Residues 7–121 (KHFYIKSFGC…LPELIEKAAS (115 aa)) form the MTTase N-terminal domain. [4Fe-4S] cluster contacts are provided by cysteine 16, cysteine 52, cysteine 84, cysteine 156, cysteine 160, and cysteine 163. The Radical SAM core domain maps to 142 to 374 (RQVGASAFLT…QALLNQQQFD (233 aa)). A TRAM domain is found at 377 to 438 (QQTIGRKATV…PNSVKGQFLD (62 aa)).

Belongs to the methylthiotransferase family. MiaB subfamily. Monomer. It depends on [4Fe-4S] cluster as a cofactor.

The protein resides in the cytoplasm. The catalysed reaction is N(6)-dimethylallyladenosine(37) in tRNA + (sulfur carrier)-SH + AH2 + 2 S-adenosyl-L-methionine = 2-methylsulfanyl-N(6)-dimethylallyladenosine(37) in tRNA + (sulfur carrier)-H + 5'-deoxyadenosine + L-methionine + A + S-adenosyl-L-homocysteine + 2 H(+). Catalyzes the methylthiolation of N6-(dimethylallyl)adenosine (i(6)A), leading to the formation of 2-methylthio-N6-(dimethylallyl)adenosine (ms(2)i(6)A) at position 37 in tRNAs that read codons beginning with uridine. This is tRNA-2-methylthio-N(6)-dimethylallyladenosine synthase from Zymomonas mobilis subsp. mobilis (strain ATCC 31821 / ZM4 / CP4).